A 425-amino-acid polypeptide reads, in one-letter code: tRNA(Ile)-lysidine synthase (425 aa).

27 to 32 contacts ATP; the sequence is SGGLDS.

The protein belongs to the tRNA(Ile)-lysidine synthase family.

The protein localises to the cytoplasm. The enzyme catalyses cytidine(34) in tRNA(Ile2) + L-lysine + ATP = lysidine(34) in tRNA(Ile2) + AMP + diphosphate + H(+). Ligates lysine onto the cytidine present at position 34 of the AUA codon-specific tRNA(Ile) that contains the anticodon CAU, in an ATP-dependent manner. Cytidine is converted to lysidine, thus changing the amino acid specificity of the tRNA from methionine to isoleucine. The sequence is that of tRNA(Ile)-lysidine synthase from Streptococcus pneumoniae (strain 70585).